Here is a 107-residue protein sequence, read N- to C-terminus: Flagellar hook-basal body complex protein FliE (107 aa).

It belongs to the FliE family.

The protein localises to the bacterial flagellum basal body. This Sodalis glossinidius (strain morsitans) protein is Flagellar hook-basal body complex protein FliE.